Reading from the N-terminus, the 309-residue chain is uncharacterized protein (309 aa).

Residues 272–291 are disordered; sequence PSLDAPSETVEAFPEPQKNL.

This is an uncharacterized protein from Bacillus subtilis (strain 168).